We begin with the raw amino-acid sequence, 882 residues long: DNA polymerase 1 (882 aa).

The segment at 1–31 (MTKQLTLFDIPSSKPAKSEQNTQQSQQSAPV) is disordered. Residues 18–29 (SEQNTQQSQQSA) are compositionally biased toward polar residues.

The protein belongs to the DNA polymerase type-B family. In terms of assembly, interacts with PCNA subunit PCNA2 and weakly with PCNA3.

It carries out the reaction DNA(n) + a 2'-deoxyribonucleoside 5'-triphosphate = DNA(n+1) + diphosphate. With respect to regulation, DNA synthesis is stimulated by PCNA heterotrimers. Its function is as follows. This polymerase possesses two enzymatic activities: DNA synthesis (polymerase) and an exonucleolytic activity that degrades single-stranded DNA in the 3'- to 5'-direction. DNA polymerase I, DNA ligase and the flap endonuclease may be constitutively associated with the PCNA heterotrimer forming a scanning complex able to couple DNA synthesis and Okazaki fragment maturation. The sequence is that of DNA polymerase 1 (dpo1) from Saccharolobus solfataricus (strain ATCC 35092 / DSM 1617 / JCM 11322 / P2) (Sulfolobus solfataricus).